Consider the following 66-residue polypeptide: Large ribosomal subunit protein bL35 (66 aa).

A disordered region spans residues 1–26 (MPKQKTHRGAAKRFKKTGSGKLKRSH).

Belongs to the bacterial ribosomal protein bL35 family.

This chain is Large ribosomal subunit protein bL35, found in Bacillus anthracis.